The following is a 298-amino-acid chain: Probable prolyl 4-hydroxylase 4 (298 aa).

Residues methionine 1–leucine 6 are Cytoplasmic-facing. Residues leucine 7–isoleucine 25 traverse the membrane as a helical; Signal-anchor for type II membrane protein segment. Over serine 26–cysteine 298 the chain is Lumenal. Residue asparagine 77 is glycosylated (N-linked (GlcNAc...) asparagine). In terms of domain architecture, Fe2OG dioxygenase spans asparagine 120–valine 245. Fe cation is bound by residues histidine 138 and aspartate 140. N-linked (GlcNAc...) asparagine glycosylation is present at asparagine 164. Histidine 226 contacts Fe cation. A 2-oxoglutarate-binding site is contributed by lysine 236. Asparagine 257 and asparagine 262 each carry an N-linked (GlcNAc...) asparagine glycan. Residues cysteine 258–cysteine 298 form the ShKT domain. Cystine bridges form between cysteine 258-cysteine 298, cysteine 265-cysteine 291, and cysteine 274-cysteine 295.

Belongs to the P4HA family. Fe(2+) is required as a cofactor. It depends on L-ascorbate as a cofactor.

The protein localises to the endoplasmic reticulum membrane. It catalyses the reaction L-prolyl-[collagen] + 2-oxoglutarate + O2 = trans-4-hydroxy-L-prolyl-[collagen] + succinate + CO2. Functionally, catalyzes the post-translational formation of 4-hydroxyproline in -Xaa-Pro-Gly- sequences in proline-rich peptide sequences of plant glycoproteins and other proteins. Hydroxyprolines are important constituent of many plant cell wall glycoproteins such as extensins, hydroxyproline-rich glycoproteins, lectins and arabinogalactan proteins. The chain is Probable prolyl 4-hydroxylase 4 from Arabidopsis thaliana (Mouse-ear cress).